The sequence spans 357 residues: Sorbitol dehydrogenase (357 aa).

Ala-2 carries the post-translational modification N-acetylalanine. Residue Cys-45 coordinates Zn(2+). Tyr-51 is a binding site for substrate. Residues His-70 and Glu-71 each coordinate Zn(2+). Substrate is bound at residue Glu-156. NAD(+) is bound by residues Ile-184, Asp-204, and Arg-209. Ser-211 and Ser-225 each carry phosphoserine. Residues 273 to 275 (VGL) and 297 to 299 (VFR) each bind NAD(+). Positions 299 and 300 each coordinate substrate.

Belongs to the zinc-containing alcohol dehydrogenase family. As to quaternary structure, homotetramer. It depends on Zn(2+) as a cofactor.

The protein localises to the mitochondrion membrane. It localises to the cell projection. It is found in the cilium. The protein resides in the flagellum. It catalyses the reaction xylitol + NAD(+) = D-xylulose + NADH + H(+). It carries out the reaction L-iditol + NAD(+) = keto-L-sorbose + NADH + H(+). The enzyme catalyses keto-D-fructose + NADH + H(+) = D-sorbitol + NAD(+). Polyol dehydrogenase that catalyzes the reversible NAD(+)-dependent oxidation of various sugar alcohols. Is active with xylitol, L-iditol and D-sorbitol (D-glucitol) as substrates, leading to the C2-oxidized products D-xylulose, L-sorbose and D-fructose, respectively. Is a key enzyme in the polyol pathway that interconverts glucose and fructose via sorbitol, which constitutes an important alternate route for glucose metabolism. May play a role in sperm motility by using sorbitol as an alternative energy source for sperm motility. The sequence is that of Sorbitol dehydrogenase (SORD) from Pongo abelii (Sumatran orangutan).